We begin with the raw amino-acid sequence, 149 residues long: D-aminoacyl-tRNA deacylase (149 aa).

Residues 137 to 138 (GP) carry the Gly-cisPro motif, important for rejection of L-amino acids motif.

Belongs to the DTD family. Homodimer.

It localises to the cytoplasm. The catalysed reaction is glycyl-tRNA(Ala) + H2O = tRNA(Ala) + glycine + H(+). It carries out the reaction a D-aminoacyl-tRNA + H2O = a tRNA + a D-alpha-amino acid + H(+). Its function is as follows. An aminoacyl-tRNA editing enzyme that deacylates mischarged D-aminoacyl-tRNAs. Also deacylates mischarged glycyl-tRNA(Ala), protecting cells against glycine mischarging by AlaRS. Acts via tRNA-based rather than protein-based catalysis; rejects L-amino acids rather than detecting D-amino acids in the active site. By recycling D-aminoacyl-tRNA to D-amino acids and free tRNA molecules, this enzyme counteracts the toxicity associated with the formation of D-aminoacyl-tRNA entities in vivo and helps enforce protein L-homochirality. This chain is D-aminoacyl-tRNA deacylase, found in Clostridium botulinum (strain ATCC 19397 / Type A).